The sequence spans 205 residues: Ribosomal RNA small subunit methyltransferase G (205 aa).

S-adenosyl-L-methionine contacts are provided by residues G66, F71, 119–120, and R135; that span reads IE.

This sequence belongs to the methyltransferase superfamily. RNA methyltransferase RsmG family.

It localises to the cytoplasm. It catalyses the reaction guanosine(527) in 16S rRNA + S-adenosyl-L-methionine = N(7)-methylguanosine(527) in 16S rRNA + S-adenosyl-L-homocysteine. In terms of biological role, specifically methylates the N7 position of guanine in position 527 of 16S rRNA. The protein is Ribosomal RNA small subunit methyltransferase G of Rhizobium leguminosarum bv. trifolii (strain WSM2304).